The chain runs to 446 residues: Protein odr-4 homolog (446 aa).

Residues 76 to 96 (ASQVGRMLPGGLMVLGVFLMT) form a helical membrane-spanning segment. The span at 394–415 (HPEKRESEPASQHLESKPENKA) shows a compositional bias: basic and acidic residues. Residues 394-417 (HPEKRESEPASQHLESKPENKARS) form a disordered region. The chain crosses the membrane as a helical span at residues 426–446 (GLVISTIVASIAIIISFYYIM).

This sequence belongs to the ODR-4 family.

Its subcellular location is the membrane. May play a role in the trafficking of a subset of G-protein coupled receptors. The sequence is that of Protein odr-4 homolog (odr4) from Xenopus laevis (African clawed frog).